The primary structure comprises 367 residues: Aminomethyltransferase (367 aa).

The protein belongs to the GcvT family. The glycine cleavage system is composed of four proteins: P, T, L and H.

It catalyses the reaction N(6)-[(R)-S(8)-aminomethyldihydrolipoyl]-L-lysyl-[protein] + (6S)-5,6,7,8-tetrahydrofolate = N(6)-[(R)-dihydrolipoyl]-L-lysyl-[protein] + (6R)-5,10-methylene-5,6,7,8-tetrahydrofolate + NH4(+). Functionally, the glycine cleavage system catalyzes the degradation of glycine. This is Aminomethyltransferase from Mycobacterium avium (strain 104).